The chain runs to 182 residues: Negative transcriptional regulator PadR (182 aa).

It belongs to the PadR family. In terms of assembly, homodimer.

It is found in the cytoplasm. With respect to regulation, padR repressor activity is inhibited in the presence of phenolic acids, which directly modulate PadR binding to the promoter of padC, leading to the dissociation of PadR from the operator DNA and expression of padC. In the presence of MgCl(2), binding is not altered by phenolic acids. In terms of biological role, transcriptional regulator involved in the regulation of the metabolism of phenolic acids. In the absence of phenolic acids, represses the expression of padC, which encodes a phenolic acid decarboxylase (PAD) involved in the detoxification of harmful phenolic acids. Acts by binding to the padC promoter region, preventing the transcription of the gene. The protein is Negative transcriptional regulator PadR of Bacillus subtilis (strain 168).